Reading from the N-terminus, the 331-residue chain is 2-oxoglutarate-dependent dioxygenase (331 aa).

A Fe2OG dioxygenase domain is found at 186 to 292 (PACPLRLLHY…RYSVVFFMDG (107 aa)). Residues histidine 214, aspartate 216, and histidine 272 each coordinate Fe cation. Arginine 283 provides a ligand contact to 2-oxoglutarate.

Belongs to the iron/ascorbate-dependent oxidoreductase family. Fe(2+) serves as cofactor.

Its pathway is mycotoxin biosynthesis. Functionally, 2-oxoglutarate-dependent dioxygenase; part of the gene cluster that mediates the biosynthesis of the selective antifungal agent ascochitine, an o-quinone methide that plays a possible protective role against other microbial competitors in nature and is considered to be important for pathogenicity of legume-associated Didymella species. The pathway probably begins with the synthesis of a keto-aldehyde intermediate by the ascochitine non-reducing polyketide synthase pksAC from successive condensations of 4 malonyl-CoA units, presumably with a simple acetyl-CoA starter unit. Release of the keto-aldehyde intermediate is consistent with the presence of the C-terminal reductive release domain. The HR-PKS (orf7) probably makes a diketide starter unit which is passed to the non-reducing polyketide synthase pksAC for further extension, producing ascochital and ascochitine. The aldehyde dehydrogenase (orf1), the 2-oxoglutarate-dependent dioxygenase (orf3) and the dehydrogenase (orf9) are probably involved in subsequent oxidations of methyl groups to the carboxylic acid of the heterocyclic ring. The ascochitine gene cluster also includes a gene encoding a short peptide with a cupin domain (orf2) that is often found in secondary metabolite gene clusters and which function has still to be determined. This chain is 2-oxoglutarate-dependent dioxygenase, found in Didymella fabae (Leaf and pod spot disease fungus).